Consider the following 312-residue polypeptide: Olfactory receptor 51B6 (312 aa).

Residues 1–23 (MGLNKSASTFQLTGFPGMEKAHH) are Extracellular-facing. Residue asparagine 4 is glycosylated (N-linked (GlcNAc...) asparagine). The helical transmembrane segment at 24–44 (WIFIPLLAAYISILLGNGTLL) threads the bilayer. The Cytoplasmic portion of the chain corresponds to 45-52 (FLIRNDHN). A helical transmembrane segment spans residues 53–73 (LHEPMYYFLAMLAATDLGVTL). Topologically, residues 74 to 97 (TTMPTVLGVLWLDHREIGHGACFS) are extracellular. Cysteines 95 and 187 form a disulfide. A helical transmembrane segment spans residues 98–118 (QAYFIHTLSVMESGVLLAMAY). Topologically, residues 119 to 137 (DCFITIRSPLRYTSILTNT) are cytoplasmic. A helical transmembrane segment spans residues 138–158 (QVMKIGVRVLTRAGLSIMPIV). Residues 159-194 (VRLHWFPYCRSHVLSHAFCLHQDVIKLACADITFNR) are Extracellular-facing. The helical transmembrane segment at 195 to 215 (LYPVVVLFAMVLLDFLIIFFS) threads the bilayer. Topologically, residues 216–235 (YILILKTVMGIGSGGERAKA) are cytoplasmic. A helical transmembrane segment spans residues 236–256 (LNTCVSHICCILVFYVTVVCL). Residues 257-271 (TFIHRFGKHVPHVVH) lie on the Extracellular side of the membrane. Residues 272–292 (ITMSYIHFLFPPFMNPFIYSI) form a helical membrane-spanning segment. Residues 293 to 312 (KTKQIQSGILRLFSLPHSRA) are Cytoplasmic-facing.

It belongs to the G-protein coupled receptor 1 family.

It is found in the cell membrane. Its function is as follows. Odorant receptor. This Homo sapiens (Human) protein is Olfactory receptor 51B6 (OR51B6).